The sequence spans 373 residues: Dof zinc finger protein 3 (373 aa).

Residues 1–23 (MASGGALSPVEEKPTVVKTTKAE) form a disordered region. Residues 10–23 (VEEKPTVVKTTKAE) show a composition bias toward basic and acidic residues. The Dof-type zinc-finger motif lies at 45–99 (PCCPRCNSIKTKFCYYNNYSMAQPRYFCRECRRYWTQGGSLRNVPVGGGCRKSKR). The Zn(2+) site is built by C47, C50, C72, and C75. Positions 297–327 (ALGGADEQQGGGDGGEAVMTKDTGGGASSSA) are disordered.

Interacts with RISBZ1/BZIP58.

Its subcellular location is the nucleus. Functionally, transcriptional activator that binds specifically to the DNA consensus core sequence 5'-AAAG-3' also known as prolamin box. Can activate the expression of genes encoding for the seed storage proteins glutelin, prolamin and globulin. Functions synergistically with RISBZ/BZIP58 to positively regulate quantitatively many seed storage proteins. Functions synergistically with RISBZ1/BZIP58 to positively regulate some metabolic enzymes, such as alanine aminotransferase and pyruvate phosphate dikinase, that are expressed in developing seeds. Functions synergistically with RISBZ1/BZIP58 to positively regulate genes that are key players in the development of aleurone layers. Functions synergistically with RISBZ1/BZIP58 to positively regulate the glutelin GLUD-1 gene in endosperm of developing seeds. Can activate the expression of the bifunctional lysine-degrading enzyme, lysine ketoglutarate reductase/saccharopine dehydrogenase (LKR/SDH), one of the key regulators determining free lysine content in plants. In germinating seeds, involved in the gibberellin-mediated activation of the alpha-amylase AMY1.1/AMY1A gene. The sequence is that of Dof zinc finger protein 3 from Oryza sativa subsp. japonica (Rice).